The chain runs to 385 residues: MELQEVLHMNGGEGEASYAKNSSFNQLVLAKVKPVLEQCVRELLRANLPNINKCIKVADLGCASGPNTLLTVWDTVQSIDKVKQEMKNELERPTIQVFLTDLFQNDFNSVFMLLPSFYRKLEKENGRKIGSCLIAAMPGSFHGRLFPEESMHFLHSSYSLQFLSQVPSGLVTELGITANKRSIYSSKASPPPVQKAYLDQFTKDFTTFLRMRSEELLSRGRMLLTCICKGDECDGPNTMDLLEMAINDLVAEGRLGEEKLDSFNVPIYTASVEEVKCMVEEEGSFEILYLQTFKLRYDAGFSIDDDCQVRSHSPVYSDEHARAAHVASLIRSVYEPILASHFGEAIIPDIFHRFATNAAKVIRLGKGFYNNLIISLAKKPEKSDI.

The S-adenosyl-L-homocysteine site is built by Tyr-18, Cys-62, Asn-67, Asp-101, Leu-102, Ser-140, and Phe-141. Tyr-158, Gln-161, and Phe-162 together coordinate caffeine. Asn-179 provides a ligand contact to Mg(2+). Thr-238 is a binding site for caffeine. Residues Asp-261, Phe-263, and Asn-264 each coordinate Mg(2+). Tyr-369 provides a ligand contact to caffeine.

It belongs to the methyltransferase superfamily. Type-7 methyltransferase family. It depends on Mg(2+) as a cofactor. Expressed in roots, stems, young and old leaves.

Its pathway is alkaloid biosynthesis. In terms of biological role, may be involved in the biosynthesis of caffeine. The chain is Probable caffeine synthase 4 from Coffea arabica (Arabian coffee).